Reading from the N-terminus, the 600-residue chain is Zinc metalloproteinase-disintegrin-like stejnihagin-B (600 aa).

The N-terminal stretch at 1 to 20 (MIEVLLVTICLAVFPYQGSS) is a signal peptide. Residues 21-191 (IILESGNVND…KASQLVVTAE (171 aa)) constitute a propeptide that is removed on maturation. Gln192 carries the post-translational modification Pyrrolidone carboxylic acid. The 192-residue stretch at 198-389 (RYVKLAIVAD…YNPQCILNAL (192 aa)) folds into the Peptidase M12B domain. Asn261 and Asn317 each carry an N-linked (GlcNAc...) asparagine glycan. Disulfide bonds link Cys306-Cys384, Cys346-Cys368, and Cys348-Cys351. A Zn(2+)-binding site is contributed by His331. The active site involves Glu332. The Zn(2+) site is built by His335 and His341. Residues 397–483 (PPVCGNELLE…DCPTDSFHRN (87 aa)) enclose the Disintegrin domain. Ca(2+) is bound by residues Val399, Asn402, Leu404, Glu406, Glu409, and Asp412. Intrachain disulfides connect Cys400–Cys429, Cys411–Cys424, Cys413–Cys419, Cys423–Cys446, Cys437–Cys443, Cys442–Cys468, Cys455–Cys475, Cys462–Cys494, Cys487–Cys499, Cys506–Cys556, Cys521–Cys565, Cys534–Cys544, Cys551–Cys587, and Cys581–Cys593. Asn425 is a glycosylation site (N-linked (GlcNAc...) asparagine). Residues 461-463 (ECD) carry the D/ECD-tripeptide motif. A glycan (N-linked (GlcNAc...) asparagine) is linked at Asn467. Asn513 carries an N-linked (GlcNAc...) asparagine glycan.

The protein belongs to the venom metalloproteinase (M12B) family. P-III subfamily. P-IIIa sub-subfamily. As to quaternary structure, monomer. It depends on Zn(2+) as a cofactor. As to expression, expressed by the venom gland.

It is found in the secreted. Functionally, this metalloproteinase-disintegrin-like impairs hemostasis in the envenomed animal. The chain is Zinc metalloproteinase-disintegrin-like stejnihagin-B from Trimeresurus stejnegeri (Chinese green tree viper).